A 133-amino-acid polypeptide reads, in one-letter code: Transcription antitermination protein NusB (133 aa).

Belongs to the NusB family.

In terms of biological role, involved in transcription antitermination. Required for transcription of ribosomal RNA (rRNA) genes. Binds specifically to the boxA antiterminator sequence of the ribosomal RNA (rrn) operons. This is Transcription antitermination protein NusB from Clostridium novyi (strain NT).